The sequence spans 449 residues: Na(+)/H(+) antiporter NhaA 2 (449 aa).

11 consecutive transmembrane segments (helical) span residues 32–52 (IEATSGAVLLLATVVALTLSN), 87–107 (GLMTLFFFIVALEIKREVVLG), 114–134 (MVALSVVAAAGGMLVPMGLYL), 145–165 (GWGVVMPTDTAFVIGCLALLG), 174–194 (VFLLSLAVVDDLAAILVVAVG), 202–222 (TALALGAVGLVIIRGMALLGV), 233–253 (AIIWLAVNASGIHATIVGVIL), 318–338 (WVAFGVMPLFALANAGVPITI), 347–367 (LAVMAGFVLGKPIGVTAFAWL), 382–402 (WGGLVGGALLTGIGFTMALFI), and 417–437 (LGILAASVVSSVAGLTLLCAL).

Belongs to the NhaA Na(+)/H(+) (TC 2.A.33) antiporter family.

It is found in the cell inner membrane. The catalysed reaction is Na(+)(in) + 2 H(+)(out) = Na(+)(out) + 2 H(+)(in). In terms of biological role, na(+)/H(+) antiporter that extrudes sodium in exchange for external protons. The sequence is that of Na(+)/H(+) antiporter NhaA 2 from Acidiphilium cryptum (strain JF-5).